The following is an 84-amino-acid chain: MKIISFVLPCLLVLAGCSTPSQPEAPKPPQIGMANPASVYCQQKGGTLIPVQTAQGVSNNCKLPGGETIDEWALWRRDHPAGEK.

This is an uncharacterized protein from Escherichia coli O6:H1 (strain CFT073 / ATCC 700928 / UPEC).